Reading from the N-terminus, the 504-residue chain is ATP synthase subunit alpha 2 (504 aa).

Residue 169-176 coordinates ATP; that stretch reads GDRQTGKT.

It belongs to the ATPase alpha/beta chains family. In terms of assembly, F-type ATPases have 2 components, CF(1) - the catalytic core - and CF(0) - the membrane proton channel. CF(1) has five subunits: alpha(3), beta(3), gamma(1), delta(1), epsilon(1). CF(0) has three main subunits: a(1), b(2) and c(9-12). The alpha and beta chains form an alternating ring which encloses part of the gamma chain. CF(1) is attached to CF(0) by a central stalk formed by the gamma and epsilon chains, while a peripheral stalk is formed by the delta and b chains.

The protein localises to the cell membrane. The enzyme catalyses ATP + H2O + 4 H(+)(in) = ADP + phosphate + 5 H(+)(out). Functionally, produces ATP from ADP in the presence of a proton gradient across the membrane. The alpha chain is a regulatory subunit. This chain is ATP synthase subunit alpha 2, found in Listeria monocytogenes serotype 4b (strain F2365).